Consider the following 306-residue polypeptide: Protoheme IX farnesyltransferase (306 aa).

9 helical membrane passes run 28–48, 53–73, 105–125, 127–147, 156–176, 182–202, 227–244, 246–266, and 283–303; these read LGLV…AIML, FLSS…IMAG, ASIL…LFTI, IETG…YSVW, TIIG…AIEP, AWML…ALAI, LSML…FFMQ, LGTV…LLAI, and FVYS…VTLI.

It belongs to the UbiA prenyltransferase family. Protoheme IX farnesyltransferase subfamily. Interacts with CtaA.

It localises to the cell membrane. It catalyses the reaction heme b + (2E,6E)-farnesyl diphosphate + H2O = Fe(II)-heme o + diphosphate. It participates in porphyrin-containing compound metabolism; heme O biosynthesis; heme O from protoheme: step 1/1. In terms of biological role, converts heme B (protoheme IX) to heme O by substitution of the vinyl group on carbon 2 of heme B porphyrin ring with a hydroxyethyl farnesyl side group. In Macrococcus caseolyticus (strain JCSC5402) (Macrococcoides caseolyticum), this protein is Protoheme IX farnesyltransferase.